A 455-amino-acid polypeptide reads, in one-letter code: Argininosuccinate lyase (455 aa).

Belongs to the lyase 1 family. Argininosuccinate lyase subfamily.

It is found in the cytoplasm. It carries out the reaction 2-(N(omega)-L-arginino)succinate = fumarate + L-arginine. The protein operates within amino-acid biosynthesis; L-arginine biosynthesis; L-arginine from L-ornithine and carbamoyl phosphate: step 3/3. This chain is Argininosuccinate lyase, found in Caulobacter sp. (strain K31).